The chain runs to 133 residues: ATP synthase epsilon chain, chloroplastic (133 aa).

Belongs to the ATPase epsilon chain family. As to quaternary structure, F-type ATPases have 2 components, CF(1) - the catalytic core - and CF(0) - the membrane proton channel. CF(1) has five subunits: alpha(3), beta(3), gamma(1), delta(1), epsilon(1). CF(0) has three main subunits: a, b and c.

It is found in the plastid. It localises to the chloroplast thylakoid membrane. In terms of biological role, produces ATP from ADP in the presence of a proton gradient across the membrane. In Helianthus annuus (Common sunflower), this protein is ATP synthase epsilon chain, chloroplastic.